Reading from the N-terminus, the 73-residue chain is NADH dehydrogenase [ubiquinone] 1 beta subcomplex subunit 3-B (73 aa).

A helical transmembrane segment spans residues 31-48 (ALPGLGIGVAAFCVYLVG).

This sequence belongs to the complex I NDUFB3 subunit family. Complex I is composed of at least 49 different subunits.

It is found in the mitochondrion inner membrane. Functionally, accessory subunit of the mitochondrial membrane respiratory chain NADH dehydrogenase (Complex I), that is believed not to be involved in catalysis. Complex I functions in the transfer of electrons from NADH to the respiratory chain. The immediate electron acceptor for the enzyme is believed to be ubiquinone. This chain is NADH dehydrogenase [ubiquinone] 1 beta subcomplex subunit 3-B, found in Arabidopsis thaliana (Mouse-ear cress).